The following is a 317-amino-acid chain: Melanocyte-stimulating hormone receptor (317 aa).

Over 1–37 (MPAQGSQRSLLGSLNSTLMATSSLGLSANQSGPQCLE) the chain is Extracellular. N-linked (GlcNAc...) asparagine glycosylation is found at Asn15 and Asn29. The helical transmembrane segment at 38 to 63 (VSVPDGLFLCLGLVSLVENMLVVAAI) threads the bilayer. Topologically, residues 64–72 (AKNRNLHSP) are cytoplasmic. Residues 73-93 (MYCFICCLALSDLLVSVSNVL) form a helical membrane-spanning segment. The Extracellular portion of the chain corresponds to 94–118 (ETAVMLLLEAGALAAQATVVQQLDN). A helical membrane pass occupies residues 119-140 (IIDVLVCSSMVSSLCFLGAIAM). The Cytoplasmic portion of the chain corresponds to 141 to 163 (DRYISIFYALRYHSIVTLSRAQW). The helical transmembrane segment at 164–183 (ATAAVWAAGILSSTLFIAYY) threads the bilayer. Over 184–191 (DHTAVLLC) the chain is Extracellular. A helical membrane pass occupies residues 192-211 (LVVFFLAMLVLMAVLYAHML). Residues 212 to 240 (TQACQHVQGITRLHKRQHLVQQGFGLKGA) lie on the Cytoplasmic side of the membrane. The helical transmembrane segment at 241–266 (ATLTILLGVFLLCWGPFFLHLTLIAV) threads the bilayer. Over 267 to 279 (CPQHPTCSCVFKN) the chain is Extracellular. The helical transmembrane segment at 280–300 (FKLFLALIICNAIVDPLIYAF) threads the bilayer. The Cytoplasmic portion of the chain corresponds to 301–317 (RXQELRKTLKEVLLFSW).

Belongs to the G-protein coupled receptor 1 family. As to quaternary structure, interacts with MGRN1, but does not undergo MGRN1-mediated ubiquitination; this interaction competes with GNAS-binding and thus inhibits agonist-induced cAMP production. Interacts with OPN3; the interaction results in a decrease in MC1R-mediated cAMP signaling and ultimately a decrease in melanin production in melanocytes.

It localises to the cell membrane. Functionally, receptor for MSH (alpha, beta and gamma) and ACTH. The activity of this receptor is mediated by G proteins which activate adenylate cyclase. Mediates melanogenesis, the production of eumelanin (black/brown) and phaeomelanin (red/yellow), via regulation of cAMP signaling in melanocytes. The chain is Melanocyte-stimulating hormone receptor (MC1R) from Loris tardigradus (Slender loris).